A 350-amino-acid polypeptide reads, in one-letter code: Ribosome production factor 2 homolog (350 aa).

Residues 28-266 (KTCLFLRGTT…LGRMREPDPA (239 aa)) enclose the Brix domain. The segment covering 192-202 (PTSSTSTNNDG) has biased composition (polar residues). Disordered stretches follow at residues 192–219 (PTSSTSTNNDGENPAPLPGMTDPRSIDP) and 301–350 (MGKT…KVKG).

Belongs to the RPF2 family. In terms of assembly, component of a hexameric 5S RNP precursor complex, composed of 5S RNA, RRS1, RPF2, RPL5, RPL11 and SYO1; this complex acts as a precursor for ribosome assembly.

Its subcellular location is the nucleus. The protein localises to the nucleolus. In terms of biological role, involved in ribosomal large subunit assembly. This is Ribosome production factor 2 homolog from Chaetomium thermophilum (strain DSM 1495 / CBS 144.50 / IMI 039719) (Thermochaetoides thermophila).